The following is a 157-amino-acid chain: Cytochrome c-type biogenesis protein CcmE (157 aa).

Residues 1-8 (MNPLRRKR) are Cytoplasmic-facing. The chain crosses the membrane as a helical; Signal-anchor for type II membrane protein span at residues 9-29 (LLIILAVLGGVGLALTLALSA). The Periplasmic portion of the chain corresponds to 30–157 (LKENINLFYT…ASMPARQADR (128 aa)). Heme contacts are provided by His-124 and Tyr-128. Residues 132–157 (EVSKALRESGQATPAPASMPARQADR) are disordered.

It belongs to the CcmE/CycJ family.

The protein resides in the cell inner membrane. Functionally, heme chaperone required for the biogenesis of c-type cytochromes. Transiently binds heme delivered by CcmC and transfers the heme to apo-cytochromes in a process facilitated by CcmF and CcmH. This is Cytochrome c-type biogenesis protein CcmE from Pseudomonas syringae pv. tomato (strain ATCC BAA-871 / DC3000).